A 356-amino-acid polypeptide reads, in one-letter code: WAT1-related protein At1g68170 (356 aa).

A run of 10 helical transmembrane segments spans residues 4-24 (ITAMVVVQIATAGLNIFFKLA), 33-53 (VLVAYRLLFATLFMIPICFIF), 65-85 (LMLLALLSGLLGVVIPSILTI), 94-114 (TFTSAAGVLTPLVTFIFAALL), 125-145 (VGLAKVFGTLFGVGGALVFIF), 176-196 (ISILGALLVFGGNISISLWFL), 210-230 (WNATLMNMMGGVVAMLVALCW), 245-265 (LLTIAYAAILISGMVVAVNAW), 273-293 (LFVSVFSPVGLVIVALVGSFL), and 298-318 (LHLGSIIGTVIIVGALYIVLW). EamA domains lie at 14–142 (TAGL…GALV) and 191–317 (ISLW…YIVL).

It belongs to the drug/metabolite transporter (DMT) superfamily. Plant drug/metabolite exporter (P-DME) (TC 2.A.7.4) family.

The protein localises to the membrane. This Arabidopsis thaliana (Mouse-ear cress) protein is WAT1-related protein At1g68170.